We begin with the raw amino-acid sequence, 85 residues long: Phosphocarrier protein HPr (85 aa).

Residues 1-85 enclose the HPr domain; sequence MYEKQVEITA…HLVALMDQLH (85 aa). The Pros-phosphohistidine intermediate role is filled by His15.

This sequence belongs to the HPr family.

The protein localises to the cytoplasm. In terms of biological role, general (non sugar-specific) component of the phosphoenolpyruvate-dependent sugar phosphotransferase system (sugar PTS). This major carbohydrate active-transport system catalyzes the phosphorylation of incoming sugar substrates concomitantly with their translocation across the cell membrane. The phosphoryl group from phosphoenolpyruvate (PEP) is transferred to the phosphoryl carrier protein HPr by enzyme I. Phospho-HPr then transfers it to the PTS EIIA domain. In Vibrio cholerae serotype O1 (strain ATCC 39315 / El Tor Inaba N16961), this protein is Phosphocarrier protein HPr (ptsH).